Reading from the N-terminus, the 167-residue chain is Large ribosomal subunit protein uL10 (167 aa).

It belongs to the universal ribosomal protein uL10 family. Part of the ribosomal stalk of the 50S ribosomal subunit. The N-terminus interacts with L11 and the large rRNA to form the base of the stalk. The C-terminus forms an elongated spine to which L12 dimers bind in a sequential fashion forming a multimeric L10(L12)X complex.

Its function is as follows. Forms part of the ribosomal stalk, playing a central role in the interaction of the ribosome with GTP-bound translation factors. This Tolumonas auensis (strain DSM 9187 / NBRC 110442 / TA 4) protein is Large ribosomal subunit protein uL10.